Consider the following 255-residue polypeptide: Complement C1q-like protein 3 (255 aa).

Residues Met1–Ala20 form the signal peptide. Residues Lys39–Gly109 are disordered. The 51-residue stretch at Gly61–Asn111 folds into the Collagen-like domain. Residues Arg75–Pro89 show a composition bias toward pro residues. The region spanning Ser122 to Asp255 is the C1q domain.

In terms of assembly, forms homooligomers. Interacts with ADGRB3. Forms heterooligomers with C1QL2 and C1QL4, when proteins are coexpressed; this interaction does not occur after secretion. In terms of tissue distribution, highly expressed in brain and white adipose tissue. In gonadal fat pad, expressed at lower levels in adipocytes than in the stromal vascular fraction (VSP), which contains preadipocytes, fibroblasts, endothelial cells and occasional immune cells. Expression exhibits sexually dimorphism, with higher levels in females than in males (at protein level). Tends to be up-regulated in adipose tissue from obese males, but not females. Expressed in glial cells.

The protein localises to the secreted. May regulate the number of excitatory synapses that are formed on hippocampus neurons. Has no effect on inhibitory synapses. Plays a role in glucose homeostasis. Via AMPK signaling pathway, stimulates glucose uptake in adipocytes, myotubes and hepatocytes and enhances insulin-stimulated glucose uptake. In a hepatoma cell line, reduces the expression of gluconeogenic enzymes G6PC1 and PCK1 and hence decreases de novo glucose production. The chain is Complement C1q-like protein 3 (C1ql3) from Mus musculus (Mouse).